A 52-amino-acid chain; its full sequence is Large ribosomal subunit protein bL32c (52 aa).

Belongs to the bacterial ribosomal protein bL32 family.

Its subcellular location is the plastid. It localises to the chloroplast. The sequence is that of Large ribosomal subunit protein bL32c from Lobularia maritima (Sweet alyssum).